We begin with the raw amino-acid sequence, 337 residues long: Eukaryotic translation initiation factor 3 subunit H (337 aa).

An MPN domain is found at valine 21–alanine 153.

Belongs to the eIF-3 subunit H family. In terms of assembly, component of the eukaryotic translation initiation factor 3 (eIF-3) complex. The eIF-3 complex interacts with pix. Interacts with mxt.

It is found in the cytoplasm. Component of the eukaryotic translation initiation factor 3 (eIF-3) complex, which is involved in protein synthesis of a specialized repertoire of mRNAs and, together with other initiation factors, stimulates binding of mRNA and methionyl-tRNAi to the 40S ribosome. The eIF-3 complex specifically targets and initiates translation of a subset of mRNAs involved in cell proliferation. In Drosophila pseudoobscura pseudoobscura (Fruit fly), this protein is Eukaryotic translation initiation factor 3 subunit H.